Consider the following 296-residue polypeptide: Nucleotide-binding protein SMU_1306c (296 aa).

Residue 13 to 20 (GMSGAGKT) coordinates ATP. Position 63–66 (63–66 (DMRS)) interacts with GTP.

Belongs to the RapZ-like family.

Its function is as follows. Displays ATPase and GTPase activities. The sequence is that of Nucleotide-binding protein SMU_1306c from Streptococcus mutans serotype c (strain ATCC 700610 / UA159).